We begin with the raw amino-acid sequence, 198 residues long: Na(+)-translocating NADH-quinone reductase subunit E (198 aa).

A run of 6 helical transmembrane segments spans residues 11–31, 39–59, 77–97, 110–130, 140–160, and 176–196; these read SIFI…FLAV, FGLG…NNLV, FLNF…LEMI, GIFL…SFMV, VVYG…LAGI, and LGIT…FSGV.

This sequence belongs to the NqrDE/RnfAE family. In terms of assembly, composed of six subunits; NqrA, NqrB, NqrC, NqrD, NqrE and NqrF.

The protein resides in the cell inner membrane. The catalysed reaction is a ubiquinone + n Na(+)(in) + NADH + H(+) = a ubiquinol + n Na(+)(out) + NAD(+). Functionally, NQR complex catalyzes the reduction of ubiquinone-1 to ubiquinol by two successive reactions, coupled with the transport of Na(+) ions from the cytoplasm to the periplasm. NqrA to NqrE are probably involved in the second step, the conversion of ubisemiquinone to ubiquinol. This chain is Na(+)-translocating NADH-quinone reductase subunit E, found in Vibrio anguillarum (Listonella anguillarum).